We begin with the raw amino-acid sequence, 466 residues long: tRNA-2-methylthio-N(6)-dimethylallyladenosine synthase (466 aa).

One can recognise an MTTase N-terminal domain in the interval 21–137 (GSYWITTFGC…LEDLLNQVDN (117 aa)). [4Fe-4S] cluster is bound by residues Cys-30, Cys-66, Cys-100, Cys-172, Cys-176, and Cys-179. The region spanning 158-395 (RDSNICAWVN…NLLVEQTAKD (238 aa)) is the Radical SAM core domain. The region spanning 398-466 (TRYHNQIVEV…AFSLTGSPIQ (69 aa)) is the TRAM domain.

It belongs to the methylthiotransferase family. MiaB subfamily. Monomer. [4Fe-4S] cluster serves as cofactor.

The protein localises to the cytoplasm. The catalysed reaction is N(6)-dimethylallyladenosine(37) in tRNA + (sulfur carrier)-SH + AH2 + 2 S-adenosyl-L-methionine = 2-methylsulfanyl-N(6)-dimethylallyladenosine(37) in tRNA + (sulfur carrier)-H + 5'-deoxyadenosine + L-methionine + A + S-adenosyl-L-homocysteine + 2 H(+). Catalyzes the methylthiolation of N6-(dimethylallyl)adenosine (i(6)A), leading to the formation of 2-methylthio-N6-(dimethylallyl)adenosine (ms(2)i(6)A) at position 37 in tRNAs that read codons beginning with uridine. The sequence is that of tRNA-2-methylthio-N(6)-dimethylallyladenosine synthase from Prochlorococcus marinus (strain SARG / CCMP1375 / SS120).